The following is a 573-amino-acid chain: Potassium-transporting ATPase potassium-binding subunit (573 aa).

10 consecutive transmembrane segments (helical) span residues 6-26, 66-86, 135-155, 177-197, 257-277, 283-303, 382-402, 428-448, 493-513, and 537-557; these read ILFA…GSYI, FFSL…ILLL, ALAV…IALI, VFWI…FQGV, IQMV…GKWV, GWLI…VMTI, IFGG…LAVF, MFAL…AAVI, ITIA…VIML, and FIFA…TIFP.

Belongs to the KdpA family. As to quaternary structure, the system is composed of three essential subunits: KdpA, KdpB and KdpC.

The protein localises to the cell inner membrane. In terms of biological role, part of the high-affinity ATP-driven potassium transport (or Kdp) system, which catalyzes the hydrolysis of ATP coupled with the electrogenic transport of potassium into the cytoplasm. This subunit binds the periplasmic potassium ions and delivers the ions to the membrane domain of KdpB through an intramembrane tunnel. The sequence is that of Potassium-transporting ATPase potassium-binding subunit from Francisella tularensis subsp. mediasiatica (strain FSC147).